A 480-amino-acid polypeptide reads, in one-letter code: Glycerol 3-phosphate dehydrogenase (480 aa).

FAD-binding positions include isoleucine 12, glutamate 31, 40–41 (TT), and 45–47 (SAI). Serine 45 and histidine 49 together coordinate sn-glycerol 3-phosphate. Histidine 49 functions as the Proton acceptor in the catalytic mechanism. Valine 172 is an FAD binding site. Positions 249 and 310 each coordinate sn-glycerol 3-phosphate. 335 to 336 (IE) contributes to the FAD binding site. Residue serine 337 coordinates sn-glycerol 3-phosphate. FAD is bound at residue serine 341. 4 residues coordinate [2Fe-2S] cluster: cysteine 400, cysteine 402, cysteine 437, and cysteine 442.

[2Fe-2S] cluster is required as a cofactor.

It carries out the reaction sn-glycerol 3-phosphate + A = dihydroxyacetone phosphate + AH2. The protein operates within polyol metabolism; glycerol degradation via glycerol kinase pathway; glycerone phosphate from sn-glycerol 3-phosphate (aerobic route): step 1/1. Functionally, catalyzes the dehydrogenation of glycerol 3-phosphate to dihydroxyacetone phosphate. Is probably involved in anaerobic glycerol metabolism. Active in vitro with the artificial electron acceptor 2,6-dichlorophenolindophenol (DCPIP), but not with NAD or NADP. Also displays a very low oxidase activity in vitro on glycerol 3-phosphate with O2 as the electron acceptor, but this activity is most likely not physiological. The sequence is that of Glycerol 3-phosphate dehydrogenase from Caloramator mitchellensis.